The chain runs to 81 residues: MSSGCLLLLLGLLTLWAELTPVSGRPRLCELPAESGLCNAYIPSFYYNPHSHKCQKFMYGGCGGNANNFKTIDECHRTCVG.

The first 24 residues, 1 to 24, serve as a signal peptide directing secretion; that stretch reads MSSGCLLLLLGLLTLWAELTPVSG. Residues 29 to 79 enclose the BPTI/Kunitz inhibitor domain; it reads CELPAESGLCNAYIPSFYYNPHSHKCQKFMYGGCGGNANNFKTIDECHRTC. Disulfide bonds link cysteine 29-cysteine 79, cysteine 38-cysteine 62, and cysteine 54-cysteine 75.

Expressed by the venom gland.

It is found in the secreted. In terms of biological role, snake venom serine protease inhibitor. The sequence is that of Kunitz-type serine protease inhibitor spermatin from Walterinnesia aegyptia (Desert black snake).